The sequence spans 487 residues: Selenium-binding protein 2 (487 aa).

An N-acetylalanine modification is found at A2. Positions 19 and 20 each coordinate selenite.

This sequence belongs to the selenium-binding protein family. As to expression, mostly expressed in seedlings, leaves and stems, and, to a lower extent, in flowers and roots.

In terms of biological role, required for the fusion of female gametophyte polar nuclei. This is Selenium-binding protein 2 (SBP2) from Arabidopsis thaliana (Mouse-ear cress).